A 181-amino-acid chain; its full sequence is Large ribosomal subunit protein uL5 (181 aa).

This sequence belongs to the universal ribosomal protein uL5 family. In terms of assembly, part of the 50S ribosomal subunit; part of the 5S rRNA/L5/L18/L25 subcomplex. Contacts the 5S rRNA and the P site tRNA. Forms a bridge to the 30S subunit in the 70S ribosome.

Its function is as follows. This is one of the proteins that bind and probably mediate the attachment of the 5S RNA into the large ribosomal subunit, where it forms part of the central protuberance. In the 70S ribosome it contacts protein S13 of the 30S subunit (bridge B1b), connecting the 2 subunits; this bridge is implicated in subunit movement. Contacts the P site tRNA; the 5S rRNA and some of its associated proteins might help stabilize positioning of ribosome-bound tRNAs. This is Large ribosomal subunit protein uL5 from Helicobacter hepaticus (strain ATCC 51449 / 3B1).